Reading from the N-terminus, the 601-residue chain is ATP-dependent RNA helicase DeaD (601 aa).

The Q motif motif lies at 6 to 34 (STFSFLGLNPFIIQSLNEMGYVKPSPIQA). Residues 37-208 (IPLLLEGRDV…KRFMRNPKEI (172 aa)) form the Helicase ATP-binding domain. Position 50–57 (50–57 (AQTGSGKT)) interacts with ATP. A DEAD box motif is present at residues 156-159 (DEAD). One can recognise a Helicase C-terminal domain in the interval 231 to 378 (KTDALIRFLE…EVQLPKVELL (148 aa)). Basic and acidic residues predominate over residues 552-576 (SRHYENKTTHRSIFNKDKNSNRRVS). Residues 552–601 (SRHYENKTTHRSIFNKDKNSNRRVSDGSFNKSNSPKKTEFKSSFFRRRNV) form a disordered region.

The protein belongs to the DEAD box helicase family. DeaD/CsdA subfamily.

It localises to the cytoplasm. It carries out the reaction ATP + H2O = ADP + phosphate + H(+). DEAD-box RNA helicase involved in various cellular processes at low temperature, including ribosome biogenesis, mRNA degradation and translation initiation. The polypeptide is ATP-dependent RNA helicase DeaD (Buchnera aphidicola subsp. Acyrthosiphon pisum (strain APS) (Acyrthosiphon pisum symbiotic bacterium)).